Reading from the N-terminus, the 101-residue chain is MGTPELKIILEFSAGAELLFGNIKRRELTLDGNQKWTISNLLKWMHANILTERPELFLQEDTVRPGILVLINDTDWELLGELDYELQPNDNVLFISTLHGG.

Gly101 is subject to 1-thioglycine. A Glycyl lysine isopeptide (Gly-Lys) (interchain with K-? in acceptor proteins) cross-link involves residue Gly101.

It belongs to the URM1 family. In terms of assembly, interacts with cer. In terms of processing, C-terminal thiocarboxylation occurs in 2 steps, it is first acyl-adenylated (-COAMP) via the hesA/moeB/thiF part of the MOCS3 homolog, then thiocarboxylated (-COSH) via the rhodanese domain of the MOCS3 homolog.

The protein localises to the cytoplasm. The protein operates within tRNA modification; 5-methoxycarbonylmethyl-2-thiouridine-tRNA biosynthesis. Functionally, acts as a sulfur carrier required for 2-thiolation of mcm(5)S(2)U at tRNA wobble positions of cytosolic tRNA(Lys), tRNA(Glu) and tRNA(Gln). Serves as sulfur donor in tRNA 2-thiolation reaction by being thiocarboxylated (-COSH) at its C-terminus by MOCS3. The sulfur is then transferred to tRNA to form 2-thiolation of mcm(5)S(2)U. Also acts as a ubiquitin-like protein (UBL) that is covalently conjugated via an isopeptide bond to lysine residues of target proteins such as Prx2/Jafrac1, Ciao1, Eip71CD and GILT1. The thiocarboxylated form serves as substrate for conjugation and oxidative stress specifically induces the formation of UBL-protein conjugates. The protein is Ubiquitin-related modifier 1 homolog of Drosophila simulans (Fruit fly).